Reading from the N-terminus, the 398-residue chain is Nicotinate phosphoribosyltransferase (398 aa).

Residue His222 is modified to Phosphohistidine; by autocatalysis.

This sequence belongs to the NAPRTase family. Post-translationally, transiently phosphorylated on a His residue during the reaction cycle. Phosphorylation strongly increases the affinity for substrates and increases the rate of nicotinate D-ribonucleotide production. Dephosphorylation regenerates the low-affinity form of the enzyme, leading to product release.

The catalysed reaction is nicotinate + 5-phospho-alpha-D-ribose 1-diphosphate + ATP + H2O = nicotinate beta-D-ribonucleotide + ADP + phosphate + diphosphate. The protein operates within cofactor biosynthesis; NAD(+) biosynthesis; nicotinate D-ribonucleotide from nicotinate: step 1/1. Functionally, catalyzes the synthesis of beta-nicotinate D-ribonucleotide from nicotinate and 5-phospho-D-ribose 1-phosphate at the expense of ATP. The protein is Nicotinate phosphoribosyltransferase of Acidovorax ebreus (strain TPSY) (Diaphorobacter sp. (strain TPSY)).